We begin with the raw amino-acid sequence, 110 residues long: Iron-sulfur cluster assembly protein CyaY (110 aa).

Belongs to the frataxin family.

Its function is as follows. Involved in iron-sulfur (Fe-S) cluster assembly. May act as a regulator of Fe-S biogenesis. The polypeptide is Iron-sulfur cluster assembly protein CyaY (Pseudomonas fluorescens (strain ATCC BAA-477 / NRRL B-23932 / Pf-5)).